A 61-amino-acid polypeptide reads, in one-letter code: Conotoxin TeAr154 (61 aa).

The N-terminal stretch at 1–19 is a signal peptide; the sequence is MHCLPVFVILLLLTASGLS. A propeptide spanning residues 20-47 is cleaved from the precursor; that stretch reads VDARPKTEDDVPLSSFRDNTKSTLQRLL. A 4-carboxyglutamate modification is found at E57.

Contains 2 disulfide bonds that can be either 'C1-C3, C2-C4' or 'C1-C4, C2-C3', since these disulfide connectivities have been observed for conotoxins with cysteine framework V (for examples, see AC P0DQQ7 and AC P81755). In terms of processing, contains 2 disulfide bonds. In terms of tissue distribution, expressed by the venom duct.

The protein resides in the secreted. In Conus textile (Cloth-of-gold cone), this protein is Conotoxin TeAr154.